Reading from the N-terminus, the 329-residue chain is Cytoplasmic phosphatidylinositol transfer protein 1 (329 aa).

A disordered region spans residues 267–329 (SHGGYSSAPS…GNKPSLAKPE (63 aa)).

Belongs to the PtdIns transfer protein family. PI transfer class IIB subfamily.

It localises to the cytoplasm. It carries out the reaction a 1,2-diacyl-sn-glycero-3-phospho-(1D-myo-inositol)(in) = a 1,2-diacyl-sn-glycero-3-phospho-(1D-myo-inositol)(out). The enzyme catalyses a 1,2-diacyl-sn-glycero-3-phosphate(in) = a 1,2-diacyl-sn-glycero-3-phosphate(out). Functionally, catalyzes the transfer of phosphatidylinositol (PI) and phosphatidic acid (PA) between membranes. Binds PA derived from the phospholipase D signaling pathway and among the cellular PA species, preferably binds to the C16:0/16:1 and C16:1/18:1 PA species. The polypeptide is Cytoplasmic phosphatidylinositol transfer protein 1 (pitpnc1) (Xenopus tropicalis (Western clawed frog)).